A 340-amino-acid chain; its full sequence is Dihydroorotase (340 aa).

Zn(2+) is bound by residues histidine 14 and histidine 16. Residues histidine 16 to arginine 18 and asparagine 42 contribute to the substrate site. Lysine 100, histidine 137, and histidine 175 together coordinate Zn(2+). Lysine 100 carries the post-translational modification N6-carboxylysine. Substrate is bound at residue histidine 137. Leucine 220 is a binding site for substrate. A Zn(2+)-binding site is contributed by aspartate 248. Aspartate 248 is a catalytic residue. Residues histidine 252 and alanine 264 each coordinate substrate.

Belongs to the metallo-dependent hydrolases superfamily. DHOase family. Class II DHOase subfamily. Homodimer. Zn(2+) is required as a cofactor.

The enzyme catalyses (S)-dihydroorotate + H2O = N-carbamoyl-L-aspartate + H(+). It participates in pyrimidine metabolism; UMP biosynthesis via de novo pathway; (S)-dihydroorotate from bicarbonate: step 3/3. Its function is as follows. Catalyzes the reversible cyclization of carbamoyl aspartate to dihydroorotate. The sequence is that of Dihydroorotase from Sphingopyxis alaskensis (strain DSM 13593 / LMG 18877 / RB2256) (Sphingomonas alaskensis).